A 1481-amino-acid polypeptide reads, in one-letter code: MQKSPLEKAGVLSKLFFSWTRPILRKGYRQRLELSDIYQIPSADSADNLSEKLEREWDRELASKKKPKLINALRRCFFWRFMFYGILLYLGEVTKAVQPLLLGRIIASYDPDNKVERSIAIYLGIGLCLLFVVRTLLLHPAIFGLHHIGMQMRIAMFSLIYKKTLKLSSRVLDKISIGQLISLLSNNLNKFDEGLALAHFVWISPLQVTLLMGLLWELLQASAFCGLAFLIVLALVQAGLGRMMMKYRDQRAGKINERLVITSEMIENIQSVKAYCWEEAMEKMIENLRQTELKLTRKAAYVRYFNSSAFFFSGFFVVFLSVLPYALTKGIILRKIFTTISFCIVLRMAVTRQFPWAVQTWYDSLGAINKIQDFLQKQEYKTLEYNLTTTEVVMDNVTAFWEEGFGELFEKAKQNNSDRKISNGDNNLFFSNFSLLGAPVLKDISFKIERGQLLAVAGSTGAGKTSLLMMIMGELEPSEGKIKHSGRISFCSQFSWIMPGTIKENIIFGVSYDEYRYKSVIKACQLEEDISKFTEKDNTVLGEGGITLSGGQRARISLARAVYKDADLYLLDSPFGYLDVLTEKEIFESCVCKLMANKTRILVTSKMEHLKKADKILILHEGSSYFYGTFSELQSLRPDFSSKLMGYDSFDQFSAERRNSILTETLRRFSLEGDASISWNDTRKQSFKQNGELGEKRKNSILNPVNSMRKFSIVPKTPLQMNGIEEDSDASIERRLSLVPDSEQGEAILPRSNMINTGPMLQGCRRQSVLNLMTHSVSQGPSIYRRTTTSARKMSLAPQTNLTEMDIYSRRLSQESGLEISEEINEEDLKECFIDDVDSIPTVTTWNTYLRYITVHRSLIFVLIWCIVIFLAEVAASLVVLWLFGNTAPQDKENSTKSGNSSYAVIITNTSSYYFFYIYVGVADTLLALGLFRGLPLVHTLITVSKILHHKMLHSVLQAPMSTLNTLKAGGILNRFSKDIAILDDLLPLTIFDFIQLLLIVVGAIAVVSVLQPYIFLATVPVIAAFILLRAYFLHTSQQLKQLESEGRSPIFTHLVTSLKGLWTLRAFGRQPYFETLFHKALNLHTANWFLYLSTLRWFQMRIEMIFVLFFIAVAFISILTTGEGEGRVGIILTLAMNIMSTLQWAVNSSIDVDSLMRSVSRVFKFIDMPTEETKSTKSIKPSSNCQLSKVMIIENQHVKKDDVWPSGGQMTVKGLTAKYIDSGNAILENISFSISPGQRVGLLGRTGSGKSTLLSAFLRLLNTEGEIQIDGVSWDSITLQQWRKAFGVIPQKVFIFSGTFRKNLDPYEQWSDQEIWKVADEVGLRSVIEQFPGKLDFVLVDGGYVLSHGHKQLMCLARSVLSKAKILLLDEPSAHLDPITYQIIRRTLKQAFADCTVILCEHRIEAMLECQRFLVIEENTVRQYESIQKLLSEKSLFRQAISSSDRAKLFPHRNSSKHKSRPQITALKEEAEEEVQGTRL.

Over 1–77 (MQKSPLEKAG…KLINALRRCF (77 aa)) the chain is Cytoplasmic. A helical transmembrane segment spans residues 78-98 (FWRFMFYGILLYLGEVTKAVQ). The ABC transmembrane type-1 1 domain occupies 81–365 (FMFYGILLYL…WAVQTWYDSL (285 aa)). Over 99 to 122 (PLLLGRIIASYDPDNKVERSIAIY) the chain is Extracellular. A helical transmembrane segment spans residues 123 to 146 (LGIGLCLLFVVRTLLLHPAIFGLH). Residues 147–195 (HIGMQMRIAMFSLIYKKTLKLSSRVLDKISIGQLISLLSNNLNKFDEGL) are Cytoplasmic-facing. The chain crosses the membrane as a helical span at residues 196-216 (ALAHFVWISPLQVTLLMGLLW). The Extracellular portion of the chain corresponds to 217–222 (ELLQAS). The helical transmembrane segment at 223-243 (AFCGLAFLIVLALVQAGLGRM) threads the bilayer. At 244-298 (MMKYRDQRAGKINERLVITSEMIENIQSVKAYCWEEAMEKMIENLRQTELKLTRK) the chain is on the cytoplasmic side. The helical transmembrane segment at 299–319 (AAYVRYFNSSAFFFSGFFVVF) threads the bilayer. The Extracellular segment spans residues 320-339 (LSVLPYALTKGIILRKIFTT). A helical transmembrane segment spans residues 340-358 (ISFCIVLRMAVTRQFPWAV). The Cytoplasmic segment spans residues 359 to 858 (QTWYDSLGAI…YLRYITVHRS (500 aa)). ATP contacts are provided by residues tryptophan 401, serine 434, 458-465 (GSTGAGKT), and glutamine 493. Residues 423–646 (NGDNNLFFSN…RPDFSSKLMG (224 aa)) form the ABC transporter 1 domain. Cysteine 524 carries S-palmitoyl cysteine lipidation. 2 positions are modified to phosphoserine: serine 549 and serine 660. Residues 654 to 831 (SAERRNSILT…EEINEEDLKE (178 aa)) form a disordered R region region. Serine 670 is subject to Phosphoserine; by PKA. Serine 686 bears the Phosphoserine mark. Residue lysine 688 forms a Glycyl lysine isopeptide (Lys-Gly) (interchain with G-Cter in ubiquitin) linkage. Serine 700 and serine 712 each carry phosphoserine. A Phosphothreonine modification is found at threonine 717. 5 positions are modified to phosphoserine: serine 737, serine 768, serine 790, serine 795, and serine 813. The helical transmembrane segment at 859–879 (LIFVLIWCIVIFLAEVAASLV) threads the bilayer. The 297-residue stretch at 859–1155 (LIFVLIWCIV…AVNSSIDVDS (297 aa)) folds into the ABC transmembrane type-1 2 domain. Residues 880–918 (VLWLFGNTAPQDKENSTKSGNSSYAVIITNTSSYYFFYI) are Extracellular-facing. N-linked (GlcNAc...) asparagine glycans are attached at residues asparagine 894, asparagine 900, and asparagine 909. The chain crosses the membrane as a discontinuously helical span at residues 919–939 (YVGVADTLLALGLFRGLPLVH). Residues 940–990 (TLITVSKILHHKMLHSVLQAPMSTLNTLKAGGILNRFSKDIAILDDLLPLT) are Cytoplasmic-facing. The chain crosses the membrane as a helical span at residues 991–1011 (IFDFIQLLLIVVGAIAVVSVL). Topologically, residues 1012–1013 (QP) are extracellular. A helical membrane pass occupies residues 1014–1034 (YIFLATVPVIAAFILLRAYFL). At 1035–1095 (HTSQQLKQLE…TANWFLYLST (61 aa)) the chain is on the cytoplasmic side. Residues 1096–1116 (LRWFQMRIEMIFVLFFIAVAF) traverse the membrane as a helical segment. Over 1117–1130 (ISILTTGEGEGRVG) the chain is Extracellular. Residues 1131–1151 (IILTLAMNIMSTLQWAVNSSI) traverse the membrane as a helical segment. The Cytoplasmic segment spans residues 1152-1481 (DVDSLMRSVS…AEEEVQGTRL (330 aa)). The region spanning 1199–1444 (VKKDDVWPSG…KSLFRQAISS (246 aa)) is the ABC transporter 2 domain. Residues tyrosine 1220 and 1245-1252 (GRTGSGKS) contribute to the ATP site. The interaction with GORASP2 stretch occupies residues 1387–1481 (RTLKQAFADC…AEEEVQGTRL (95 aa)). Residue cysteine 1396 is the site of S-palmitoyl cysteine attachment. 2 positions are modified to phosphoserine: serine 1445 and serine 1457. A disordered region spans residues 1449–1481 (KLFPHRNSSKHKSRPQITALKEEAEEEVQGTRL). Residues 1450–1462 (LFPHRNSSKHKSR) are compositionally biased toward basic residues. Residues 1471–1481 (EAEEEVQGTRL) are compositionally biased toward acidic residues. Residues 1479–1481 (TRL) carry the PDZ-binding motif.

It belongs to the ABC transporter superfamily. ABCC family. CFTR transporter (TC 3.A.1.202) subfamily. As to quaternary structure, monomer; does not require oligomerization for channel activity. May form oligomers in the membrane. Interacts with SLC26A3, SLC26A6 and NHERF1. Interacts with SHANK2. Interacts with MYO6. Interacts (via C-terminus) with GOPC (via PDZ domain); this promotes CFTR internalization and thereby decreases channel activity. Interacts with SLC4A7 through NHERF1. Found in a complex with MYO5B and RAB11A. Interacts with ANO1. Interacts with SLC26A8. Interacts with AHCYL1; the interaction increases CFTR activity. Interacts with CSE1L. The core-glycosylated form interacts with GORASP2 (via PDZ GRASP-type 1 domain) in respone to ER stress. Interacts with MARCHF2; the interaction leads to CFTR ubiqtuitination and degradation. Interacts with ADGRG2. Post-translationally, N-glycosylated. In terms of processing, phosphorylated; cAMP treatment promotes phosphorylation and activates the channel. Dephosphorylation decreases the ATPase activity (in vitro). Phosphorylation at PKA sites activates the channel. Phosphorylation at PKC sites enhances the response to phosphorylation by PKA. Phosphorylated by AMPK; this inhibits channel activity. Ubiquitinated, leading to its degradation in the lysosome. Deubiquitination by USP10 in early endosomes enhances its endocytic recycling to the cell membrane. Ubiquitinated by RNF185 during ER stress. Ubiquitinated by MARCHF2. As to expression, isoform 1 is expressed in the pancreas. Isoform 2 is specifically expressed in the ventricle.

It localises to the apical cell membrane. The protein resides in the early endosome membrane. Its subcellular location is the cell membrane. The protein localises to the recycling endosome membrane. It is found in the endoplasmic reticulum membrane. It localises to the nucleus. The catalysed reaction is ATP + H2O + closed Cl(-) channel = ADP + phosphate + open Cl(-) channel.. It carries out the reaction chloride(in) = chloride(out). The enzyme catalyses hydrogencarbonate(in) = hydrogencarbonate(out). It catalyses the reaction ATP + H2O = ADP + phosphate + H(+). Its function is as follows. Epithelial ion channel that plays an important role in the regulation of epithelial ion and water transport and fluid homeostasis. Mediates the transport of chloride ions across the cell membrane. Possesses an intrinsic ATPase activity and utilizes ATP to gate its channel; the passive flow of anions through the channel is gated by cycles of ATP binding and hydrolysis by the ATP-binding domains. The ion channel is also permeable to HCO(3)(-); selectivity depends on the extracellular chloride concentration. Exerts its function also by modulating the activity of other ion channels and transporters. Contributes to the regulation of the pH and the ion content of the epithelial fluid layer. Modulates the activity of the epithelial sodium channel (ENaC) complex, in part by regulating the cell surface expression of the ENaC complex. May regulate bicarbonate secretion and salvage in epithelial cells by regulating the transporter SLC4A7. Can inhibit the chloride channel activity of ANO1. Plays a role in the chloride and bicarbonate homeostasis during sperm epididymal maturation and capacitation. In Oryctolagus cuniculus (Rabbit), this protein is Cystic fibrosis transmembrane conductance regulator.